The following is a 395-amino-acid chain: Probable eukaryotic translation initiation factor 5 (395 aa).

28-35 contacts GTP; that stretch reads GKGNGIKT. Disordered stretches follow at residues 146–171 and 374–395; these read PPAK…AEDE and LAEA…DDDE. Residues 147-157 are compositionally biased toward basic residues; that stretch reads PAKKKSHKHKR. Acidic residues-rich tracts occupy residues 161 to 170 and 377 to 395; these read VAEEEDGAED and ASDE…DDDE. The W2 domain occupies 228-384; that stretch reads EEAESSRYDQ…AEASDESESE (157 aa).

It belongs to the eIF-2-beta/eIF-5 family. Monomer.

In terms of biological role, catalyzes the hydrolysis of GTP bound to the 40S ribosomal initiation complex (40S.mRNA.Met-tRNA[F].eIF-2.GTP) with the subsequent joining of a 60S ribosomal subunit resulting in the release of eIF-2 and the guanine nucleotide. The subsequent joining of a 60S ribosomal subunit results in the formation of a functional 80S initiation complex (80S.mRNA.Met-tRNA[F]). The polypeptide is Probable eukaryotic translation initiation factor 5 (tif5) (Schizosaccharomyces pombe (strain 972 / ATCC 24843) (Fission yeast)).